We begin with the raw amino-acid sequence, 156 residues long: MSQFDVTVFTDGSCLGNPGPGGWAAIMRCNGCEKELSGGFALTTNNRMEILAVLEALEALRDPCKVTLFTDSQYVRNAVEKKWLAGWQRNGWKTADKKPVKNRDLWERLVPLLAKHSVSFRWVRGHSGHPENERCDVLARAQASRRGLPEDPGFTA.

Positions 2 to 144 constitute an RNase H type-1 domain; that stretch reads SQFDVTVFTD…CDVLARAQAS (143 aa). Mg(2+) contacts are provided by Asp11, Glu49, Asp71, and Asp136.

The protein belongs to the RNase H family. In terms of assembly, monomer. Requires Mg(2+) as cofactor.

Its subcellular location is the cytoplasm. It catalyses the reaction Endonucleolytic cleavage to 5'-phosphomonoester.. Its function is as follows. Endonuclease that specifically degrades the RNA of RNA-DNA hybrids. This is Ribonuclease H from Nitratidesulfovibrio vulgaris (strain ATCC 29579 / DSM 644 / CCUG 34227 / NCIMB 8303 / VKM B-1760 / Hildenborough) (Desulfovibrio vulgaris).